Consider the following 514-residue polypeptide: 2,3-bisphosphoglycerate-independent phosphoglycerate mutase (514 aa).

Mn(2+) contacts are provided by D14 and S64. Residue S64 is the Phosphoserine intermediate of the active site. Substrate is bound by residues H125, 155–156, R187, R193, 263–266, and K336; these read RD and RADR. D403, H407, D444, H445, and H463 together coordinate Mn(2+).

The protein belongs to the BPG-independent phosphoglycerate mutase family. In terms of assembly, monomer. It depends on Mn(2+) as a cofactor.

It catalyses the reaction (2R)-2-phosphoglycerate = (2R)-3-phosphoglycerate. It participates in carbohydrate degradation; glycolysis; pyruvate from D-glyceraldehyde 3-phosphate: step 3/5. Functionally, catalyzes the interconversion of 2-phosphoglycerate and 3-phosphoglycerate. This chain is 2,3-bisphosphoglycerate-independent phosphoglycerate mutase, found in Shigella flexneri.